A 307-amino-acid chain; its full sequence is Undecaprenyl-diphosphatase (307 aa).

6 consecutive transmembrane segments (helical) span residues 40–60, 79–99, 107–127, 183–203, 219–239, and 249–269; these read AAKT…VVYF, LRLA…GLLF, LFGP…MIGV, AAAA…ATVF, IVAL…VIAV, and LAPF…LWIA.

Belongs to the UppP family.

The protein resides in the cell inner membrane. It catalyses the reaction di-trans,octa-cis-undecaprenyl diphosphate + H2O = di-trans,octa-cis-undecaprenyl phosphate + phosphate + H(+). Its function is as follows. Catalyzes the dephosphorylation of undecaprenyl diphosphate (UPP). Confers resistance to bacitracin. The sequence is that of Undecaprenyl-diphosphatase from Sorangium cellulosum (strain So ce56) (Polyangium cellulosum (strain So ce56)).